The primary structure comprises 116 residues: Large ribosomal subunit protein bL19 (116 aa).

This sequence belongs to the bacterial ribosomal protein bL19 family.

Its function is as follows. This protein is located at the 30S-50S ribosomal subunit interface and may play a role in the structure and function of the aminoacyl-tRNA binding site. In Mycoplasma mobile (strain ATCC 43663 / 163K / NCTC 11711) (Mesomycoplasma mobile), this protein is Large ribosomal subunit protein bL19.